The sequence spans 135 residues: Adult cuticle protein 1 (135 aa).

An N-terminal signal peptide occupies residues 1–19; that stretch reads MKFAVAVIFTLALAMGVQS. 3 consecutive repeat copies span residues 72–75, 78–81, and 128–131.

As to expression, detected in the epidermis underlying the head and thorax (including legs and wings), but not in the abdominal epidermis of newly eclosed flies.

Functionally, component of the cuticle of the adult fruit fly. Could be involved in thickening of the hard adult cuticle. In Drosophila melanogaster (Fruit fly), this protein is Adult cuticle protein 1 (Acp1).